The following is a 602-amino-acid chain: Protein NRT1/ PTR FAMILY 5.7 (602 aa).

Transmembrane regions (helical) follow at residues 56–73 (LSYFGISTNLVVYLTTIL) and 87–107 (WSGVTTLMPLLGGFVADAYLG). A Phosphothreonine modification is found at Thr111. The next 10 helical transmembrane spans lie at 112–132 (VLLATTIYLMGLILLTLSWFI), 152–172 (IAFFIAIYLISIGTGGHKPSL), 197–217 (WWNAGLCAGILTAVTVIVYIE), 220–240 (IGWGVASIILTIVMATSFFIF), 337–357 (VKLLINMIPIWFFTLAFGVCA), 381–401 (IVPPASLFSLIALSIIITVTI), 422–442 (ILQRIGVGMVFSLFAMIIAAL), 465–485 (IWLAPQFLVLGVADAFTLVGL), 500–520 (LGIAFYLSVLGAASFVNNLLI), and 548–568 (FYWMLAALTAANICCFVIVAM).

This sequence belongs to the major facilitator superfamily. Proton-dependent oligopeptide transporter (POT/PTR) (TC 2.A.17) family. Expressed in shoots, stems, leaves and flowers.

It is found in the membrane. This chain is Protein NRT1/ PTR FAMILY 5.7 (NPF5.7), found in Arabidopsis thaliana (Mouse-ear cress).